The primary structure comprises 315 residues: Periplasmic [NiFeSe] hydrogenase small subunit (315 aa).

The tat-type signal signal peptide spans 1 to 32 (MSLSRREFVKLCSAGVAGLGISQIYHPGIVHA). 12 residues coordinate [4Fe-4S] cluster: Cys50, Cys53, Cys158, Cys196, His240, Cys243, Cys263, Cys269, Cys278, Cys290, Cys296, and Cys299.

The protein belongs to the [NiFe]/[NiFeSe] hydrogenase small subunit family. In terms of assembly, heterodimer of a large and a small subunit. [4Fe-4S] cluster is required as a cofactor. Post-translationally, predicted to be exported by the Tat system. The position of the signal peptide cleavage has been experimentally proven.

The protein resides in the periplasm. It catalyses the reaction H2 + A = AH2. In Desulfomicrobium baculatum (Desulfovibrio baculatus), this protein is Periplasmic [NiFeSe] hydrogenase small subunit.